A 340-amino-acid polypeptide reads, in one-letter code: Myb-related protein Zm1 (340 aa).

HTH myb-type domains follow at residues 11 to 63 and 64 to 118; these read KVGL…INYL and RPDL…KKKV. 2 DNA-binding regions (H-T-H motif) span residues 39–63 and 91–114; these read WRALPKQAGLLRCGKSCRLRWINYL and WSKIAACLPGRTDNEIKNVWNTHL. Over residues 116–126 the composition is skewed to basic residues; that stretch reads KKVAQREKKKA. Disordered stretches follow at residues 116–173 and 190–209; these read KKVA…DATD and DGAPPAAQPMPSPSSSSSLT. The span at 133–166 shows a compositional bias: low complexity; the sequence is AGTPATAPLSSATSSTTTHNSSGGSDSGDQCGTS.

It is found in the nucleus. Functionally, transcription factor that positively regulates genes involved in anthocyanin biosynthesis such as A1. The protein is Myb-related protein Zm1 of Zea mays (Maize).